The following is a 318-amino-acid chain: Peroxisomal targeting signal 2 receptor (318 aa).

WD repeat units follow at residues 60–91 (DWND…QLWD), 104–136 (EHTQ…KVWD), 148–179 (GHES…RIWD), 191–222 (AHQT…RGWD), 235–266 (GHTY…RFWN), and 279–310 (HHTE…KIYD).

It belongs to the WD repeat peroxin-7 family. As to quaternary structure, interacts with PEX5; interaction only takes place when PEX7 is associated with cargo proteins. Interacts with VWA8.

Its subcellular location is the cytoplasm. It is found in the cytosol. The protein resides in the peroxisome matrix. Its function is as follows. Receptor required for the peroxisomal import of proteins containing a C-terminal PTS2-type peroxisomal targeting signal. Specifically binds to cargo proteins containing a PTS2 peroxisomal targeting signal in the cytosol. Cargo protein-binding triggers interaction with PEX5 and formation of a ternary complex composed of PEX5 and PEX7 along with PTS2-containing cargo proteins, which is tranlocated into peroxisomes by passing through the PEX13-PEX14 docking complex. The protein is Peroxisomal targeting signal 2 receptor of Mus musculus (Mouse).